Here is a 503-residue protein sequence, read N- to C-terminus: UDP-N-acetylmuramoylalanine--D-glutamate ligase (503 aa).

Residue 129–135 (GTNGKTT) participates in ATP binding.

The protein belongs to the MurCDEF family.

Its subcellular location is the cytoplasm. It carries out the reaction UDP-N-acetyl-alpha-D-muramoyl-L-alanine + D-glutamate + ATP = UDP-N-acetyl-alpha-D-muramoyl-L-alanyl-D-glutamate + ADP + phosphate + H(+). It functions in the pathway cell wall biogenesis; peptidoglycan biosynthesis. Cell wall formation. Catalyzes the addition of glutamate to the nucleotide precursor UDP-N-acetylmuramoyl-L-alanine (UMA). This chain is UDP-N-acetylmuramoylalanine--D-glutamate ligase, found in Burkholderia multivorans (strain ATCC 17616 / 249).